The primary structure comprises 272 residues: Ribosomal RNA small subunit methyltransferase A (272 aa).

The S-adenosyl-L-methionine site is built by Asn20, Leu22, Gly47, Glu68, Asp93, and Asn114.

Belongs to the class I-like SAM-binding methyltransferase superfamily. rRNA adenine N(6)-methyltransferase family. RsmA subfamily.

It is found in the cytoplasm. The enzyme catalyses adenosine(1518)/adenosine(1519) in 16S rRNA + 4 S-adenosyl-L-methionine = N(6)-dimethyladenosine(1518)/N(6)-dimethyladenosine(1519) in 16S rRNA + 4 S-adenosyl-L-homocysteine + 4 H(+). Specifically dimethylates two adjacent adenosines (A1518 and A1519) in the loop of a conserved hairpin near the 3'-end of 16S rRNA in the 30S particle. May play a critical role in biogenesis of 30S subunits. The protein is Ribosomal RNA small subunit methyltransferase A of Aliivibrio fischeri (strain ATCC 700601 / ES114) (Vibrio fischeri).